An 89-amino-acid polypeptide reads, in one-letter code: UPF0147 protein Saci_0891 (89 aa).

This sequence belongs to the UPF0147 family.

This chain is UPF0147 protein Saci_0891, found in Sulfolobus acidocaldarius (strain ATCC 33909 / DSM 639 / JCM 8929 / NBRC 15157 / NCIMB 11770).